The following is a 247-amino-acid chain: Ferredoxin:CoB-CoM heterodisulfide reductase subunit C (247 aa).

Residues 32 to 62 (TPESLGLDRCIQCGACTASCPAARFTDYSPR) enclose the 4Fe-4S ferredoxin-type domain. The [4Fe-4S] cluster site is built by Cys41, Cys44, Cys47, Cys51, Cys84, Cys87, Cys90, and Cys94. Positions 216-240 (RTGTSCTEKKKNSGDLGFESDREYT) are enriched in basic and acidic residues. Residues 216–247 (RTGTSCTEKKKNSGDLGFESDREYTGQEALTV) are disordered.

Belongs to the HdrC family. In terms of assembly, the ferredoxin:CoB-CoM heterodisulfide reductase is composed of three subunits; HdrA1, HdrB1 and HdrC1. It depends on [4Fe-4S] cluster as a cofactor.

Its subcellular location is the cytoplasm. The enzyme catalyses coenzyme B + coenzyme M + 2 oxidized [2Fe-2S]-[ferredoxin] = coenzyme M-coenzyme B heterodisulfide + 2 reduced [2Fe-2S]-[ferredoxin] + 2 H(+). It functions in the pathway cofactor metabolism; coenzyme M-coenzyme B heterodisulfide reduction; coenzyme B and coenzyme M from coenzyme M-coenzyme B heterodisulfide: step 1/1. In terms of biological role, part of a complex that catalyzes the reversible reduction of CoM-S-S-CoB to the thiol-coenzymes H-S-CoM (coenzyme M) and H-S-CoB (coenzyme B). Probably involved in methylotrophic methanogenesis but not in aceticlastic methanogenesis. This Methanosarcina acetivorans (strain ATCC 35395 / DSM 2834 / JCM 12185 / C2A) protein is Ferredoxin:CoB-CoM heterodisulfide reductase subunit C.